The chain runs to 258 residues: Phosphoribosylformylglycinamidine synthase subunit PurQ (258 aa).

Residues 7–238 form the Glutamine amidotransferase type-1 domain; the sequence is IGILLMEGTN…QAMYLETEKD (232 aa). The active-site Nucleophile is the cysteine 97. Active-site residues include histidine 220 and glutamate 222.

Part of the FGAM synthase complex composed of 1 PurL, 1 PurQ and 2 PurS subunits.

The protein localises to the cytoplasm. The enzyme catalyses N(2)-formyl-N(1)-(5-phospho-beta-D-ribosyl)glycinamide + L-glutamine + ATP + H2O = 2-formamido-N(1)-(5-O-phospho-beta-D-ribosyl)acetamidine + L-glutamate + ADP + phosphate + H(+). It carries out the reaction L-glutamine + H2O = L-glutamate + NH4(+). Its pathway is purine metabolism; IMP biosynthesis via de novo pathway; 5-amino-1-(5-phospho-D-ribosyl)imidazole from N(2)-formyl-N(1)-(5-phospho-D-ribosyl)glycinamide: step 1/2. In terms of biological role, part of the phosphoribosylformylglycinamidine synthase complex involved in the purines biosynthetic pathway. Catalyzes the ATP-dependent conversion of formylglycinamide ribonucleotide (FGAR) and glutamine to yield formylglycinamidine ribonucleotide (FGAM) and glutamate. The FGAM synthase complex is composed of three subunits. PurQ produces an ammonia molecule by converting glutamine to glutamate. PurL transfers the ammonia molecule to FGAR to form FGAM in an ATP-dependent manner. PurS interacts with PurQ and PurL and is thought to assist in the transfer of the ammonia molecule from PurQ to PurL. The protein is Phosphoribosylformylglycinamidine synthase subunit PurQ of Thermoplasma volcanium (strain ATCC 51530 / DSM 4299 / JCM 9571 / NBRC 15438 / GSS1).